The following is a 142-amino-acid chain: Hemoglobin subunit alpha-C (142 aa).

Alanine 2 carries the N-acetylalanine modification. The Globin domain maps to 2-142 (ALNCDDKAHI…VSGLLTSKYR (141 aa)). Histidine 59 lines the O2 pocket. Histidine 88 contributes to the heme b binding site.

It belongs to the globin family. As to quaternary structure, heterotetramer of either two alpha-B chains or two alpha-C chains and two beta chains. The two major hemoglobins, B and C, associate upon deoxygenation to form a trimer of tetramers, BC2, that has a much lower affinity for oxygen than either component alone. In terms of tissue distribution, red blood cells.

Functionally, the alpha-C chain is a component of adult hemoglobin C. This Aquarana catesbeiana (American bullfrog) protein is Hemoglobin subunit alpha-C.